The chain runs to 861 residues: Integrator complex subunit 6-like (861 aa).

The 225-residue stretch at 3 to 227 (ILLFLIDTSA…QCLESLVQKV (225 aa)) folds into the VWFA domain. Residues 605–626 (PQNKVKRPGEPNSPMSSKRRRS) are disordered. Residue S617 is modified to Phosphoserine.

The sequence is that of Integrator complex subunit 6-like (INTS6L) from Homo sapiens (Human).